The sequence spans 386 residues: MEEQGIQCAPPPPAASQTGVPLTNLSHNCSADGYIYQDSIALPWKVLLVALLALITLATTLSNAFVIATVYRTRKLHTPANYLIASLAVTDLLVSILVMPISTMYTVTGRWTLGQVVCDFWLSSDITCCTASIMHLCVIALDRYWAITDAVEYSAKRTPKRAAIMIVLVWVFSISISLPPFFWRQAKAEEEMLDCFVNTDHVLYTVYSTVGAFYLPTLLLIALYGRIYVEARSRILKQTPNKTGKRLTRAQLITDSPGSTSSVTSINSRAPDVPSESGSPVYVNQVKVRVSDALLEKKKLMAARERKATKTLGIILGAFIVCWLPFFIISLVMPICKDACWFHMAIFDFFNWLGYLNSLINPIIYTMSNEDFKQAFHKLIRFKCAG.

Residues 1-42 lie on the Extracellular side of the membrane; that stretch reads MEEQGIQCAPPPPAASQTGVPLTNLSHNCSADGYIYQDSIAL. Residues Asn24 and Asn28 are each glycosylated (N-linked (GlcNAc...) asparagine). A helical membrane pass occupies residues 43–68; that stretch reads PWKVLLVALLALITLATTLSNAFVIA. Residues 69–82 lie on the Cytoplasmic side of the membrane; the sequence is TVYRTRKLHTPANY. Residues 83–107 form a helical membrane-spanning segment; it reads LIASLAVTDLLVSILVMPISTMYTV. Residues 108 to 115 are Extracellular-facing; the sequence is TGRWTLGQ. The chain crosses the membrane as a helical span at residues 116–141; the sequence is VVCDFWLSSDITCCTASIMHLCVIAL. An intrachain disulfide couples Cys118 to Cys195. Ergotamine contacts are provided by Asp125 and Thr130. The short motif at 142–144 is the DRY motif; important for ligand-induced conformation changes and signaling element; the sequence is DRY. At 142–161 the chain is on the cytoplasmic side; the sequence is DRYWAITDAVEYSAKRTPKR. Residues 162-180 form a helical membrane-spanning segment; the sequence is AAIMIVLVWVFSISISLPP. The Extracellular segment spans residues 181 to 201; that stretch reads FFWRQAKAEEEMLDCFVNTDH. Val197 serves as a coordination point for ergotamine. A helical transmembrane segment spans residues 202 to 225; it reads VLYTVYSTVGAFYLPTLLLIALYG. The Cytoplasmic portion of the chain corresponds to 226–311; it reads RIYVEARSRI…AARERKATKT (86 aa). Over residues 255-268 the composition is skewed to polar residues; that stretch reads DSPGSTSSVTSINS. Positions 255–278 are disordered; that stretch reads DSPGSTSSVTSINSRAPDVPSESG. Residues 312–333 form a helical membrane-spanning segment; that stretch reads LGIILGAFIVCWLPFFIISLVM. Residues 334 to 343 are Extracellular-facing; sequence PICKDACWFH. The helical transmembrane segment at 344–366 threads the bilayer; that stretch reads MAIFDFFNWLGYLNSLINPIIYT. Residues 361-365 carry the NPxxY motif; important for ligand-induced conformation changes and signaling motif; it reads NPIIY. The Cytoplasmic portion of the chain corresponds to 367–386; the sequence is MSNEDFKQAFHKLIRFKCAG. Cys384 carries the S-palmitoyl cysteine lipid modification.

The protein belongs to the G-protein coupled receptor 1 family. Homodimer. Heterodimer with HTR1D. Phosphorylated. Desensitization of the receptor may be mediated by its phosphorylation. Post-translationally, palmitoylated. Predominantly expressed in striatum and Purkinje cells.

The protein resides in the cell membrane. Its function is as follows. G-protein coupled receptor for 5-hydroxytryptamine (serotonin). Also functions as a receptor for ergot alkaloid derivatives, various anxiolytic and antidepressant drugs and other psychoactive substances, such as lysergic acid diethylamide (LSD). Ligand binding causes a conformation change that triggers signaling via guanine nucleotide-binding proteins (G proteins) and modulates the activity of downstream effectors, such as adenylate cyclase. HTR1B is coupled to G(i)/G(o) G alpha proteins and mediates inhibitory neurotransmission by inhibiting adenylate cyclase activity. Arrestin family members inhibit signaling via G proteins and mediate activation of alternative signaling pathways. Regulates the release of 5-hydroxytryptamine, dopamine and acetylcholine in the brain, and thereby affects neural activity, nociceptive processing, pain perception, mood and behavior. Besides, plays a role in vasoconstriction of cerebral arteries. The sequence is that of 5-hydroxytryptamine receptor 1B (Htr1b) from Mus musculus (Mouse).